The primary structure comprises 210 residues: Phosphoenolpyruvate guanylyltransferase (210 aa).

Residues threonine 130, glycine 146, and serine 149 each contribute to the phosphoenolpyruvate site.

The protein belongs to the CofC family.

The enzyme catalyses phosphoenolpyruvate + GTP + H(+) = enolpyruvoyl-2-diphospho-5'-guanosine + diphosphate. It participates in cofactor biosynthesis; coenzyme F420 biosynthesis. Functionally, guanylyltransferase that catalyzes the activation of phosphoenolpyruvate (PEP) as enolpyruvoyl-2-diphospho-5'-guanosine, via the condensation of PEP with GTP. It is involved in the biosynthesis of coenzyme F420, a hydride carrier cofactor. The chain is Phosphoenolpyruvate guanylyltransferase from Roseiflexus castenholzii (strain DSM 13941 / HLO8).